The chain runs to 299 residues: tRNA dimethylallyltransferase (299 aa).

ATP is bound at residue 13–20; that stretch reads GPTASGKT. Residue 15 to 20 participates in substrate binding; that stretch reads TASGKT. Residues 38–41 are interaction with substrate tRNA; the sequence is DSRQ.

The protein belongs to the IPP transferase family. Monomer. It depends on Mg(2+) as a cofactor.

It carries out the reaction adenosine(37) in tRNA + dimethylallyl diphosphate = N(6)-dimethylallyladenosine(37) in tRNA + diphosphate. Functionally, catalyzes the transfer of a dimethylallyl group onto the adenine at position 37 in tRNAs that read codons beginning with uridine, leading to the formation of N6-(dimethylallyl)adenosine (i(6)A). The protein is tRNA dimethylallyltransferase of Prochlorococcus marinus subsp. pastoris (strain CCMP1986 / NIES-2087 / MED4).